The chain runs to 771 residues: DNA helicase/primase complex-associated protein (771 aa).

This sequence belongs to the herpesviridae HEPA family. In terms of assembly, associates with the primase and the helicase to form the helicase-primase complex. Interacts with the origin-binding protein. Interacts with the polymerase catalytic subunit.

Its subcellular location is the host nucleus. Component of the helicase/primase complex. Unwinds the DNA at the replication forks and generates single-stranded DNA for both leading and lagging strand synthesis. The primase synthesizes short RNA primers on the lagging strand that the polymerase presumably elongates using dNTPs. The primase-associated factor has no known catalytic activity in the complex and may serve to facilitate the formation of the replisome by directly interacting with the origin-binding protein and the polymerase. This Varicella-zoster virus (strain Oka vaccine) (HHV-3) protein is DNA helicase/primase complex-associated protein.